A 429-amino-acid polypeptide reads, in one-letter code: Glutamate-1-semialdehyde 2,1-aminomutase (429 aa).

Residue lysine 265 is modified to N6-(pyridoxal phosphate)lysine.

The protein belongs to the class-III pyridoxal-phosphate-dependent aminotransferase family. HemL subfamily. As to quaternary structure, homodimer. It depends on pyridoxal 5'-phosphate as a cofactor.

It is found in the cytoplasm. It catalyses the reaction (S)-4-amino-5-oxopentanoate = 5-aminolevulinate. It participates in porphyrin-containing compound metabolism; protoporphyrin-IX biosynthesis; 5-aminolevulinate from L-glutamyl-tRNA(Glu): step 2/2. The protein is Glutamate-1-semialdehyde 2,1-aminomutase of Azotobacter vinelandii (strain DJ / ATCC BAA-1303).